A 130-amino-acid chain; its full sequence is Histone H2A type 1-C (130 aa).

Residues 1–22 (MSGRGKQGGKARAKAKSRSSRA) form a disordered region. The residue at position 2 (S2) is an N-acetylserine. S2 is modified (phosphoserine; by RPS6KA5). R4 carries the post-translational modification Citrulline; alternate. R4 is modified (symmetric dimethylarginine; by PRMT5; alternate). K6 and K10 each carry N6-(2-hydroxyisobutyryl)lysine; alternate. K6 carries the N6-acetyllysine; alternate modification. Residues 7 to 19 (QGGKARAKAKSRS) are compositionally biased toward basic residues. N6-(beta-hydroxybutyryl)lysine; alternate occurs at positions 10 and 14. The residue at position 10 (K10) is an N6-lactoyllysine; alternate. K10 carries the post-translational modification N6-succinyllysine; alternate. Residue K14 forms a Glycyl lysine isopeptide (Lys-Gly) (interchain with G-Cter in ubiquitin); alternate linkage. A Glycyl lysine isopeptide (Lys-Gly) (interchain with G-Cter in ubiquitin) cross-link involves residue K16. K37 carries the N6-(2-hydroxyisobutyryl)lysine; alternate modification. K37 carries the N6-(beta-hydroxybutyryl)lysine; alternate modification. K37 carries the N6-crotonyllysine; alternate modification. Residues K75 and K76 each carry the N6-(2-hydroxyisobutyryl)lysine modification. Residue K96 is modified to N6-(2-hydroxyisobutyryl)lysine; alternate. At K96 the chain carries N6-(beta-hydroxybutyryl)lysine; alternate. K96 carries the N6-succinyllysine; alternate modification. K96 is modified (N6-glutaryllysine; alternate). N5-methylglutamine is present on Q105. N6-(2-hydroxyisobutyryl)lysine; alternate is present on K119. Residue K119 is modified to N6-(beta-hydroxybutyryl)lysine; alternate. K119 and K120 each carry N6-crotonyllysine; alternate. An N6-glutaryllysine; alternate mark is found at K119 and K120. K120 is covalently cross-linked (Glycyl lysine isopeptide (Lys-Gly) (interchain with G-Cter in ubiquitin); alternate). Residue T121 is modified to Phosphothreonine; by DCAF1. N6-crotonyllysine; alternate is present on K126. K126 is subject to N6-glutaryllysine; alternate.

It belongs to the histone H2A family. The nucleosome is a histone octamer containing two molecules each of H2A, H2B, H3 and H4 assembled in one H3-H4 heterotetramer and two H2A-H2B heterodimers. The octamer wraps approximately 147 bp of DNA. In terms of processing, deiminated on Arg-4 in granulocytes upon calcium entry. Post-translationally, monoubiquitination of Lys-120 (H2AK119Ub) by RING1, TRIM37 and RNF2/RING2 complex gives a specific tag for epigenetic transcriptional repression and participates in X chromosome inactivation of female mammals. It is involved in the initiation of both imprinted and random X inactivation. Ubiquitinated H2A is enriched in inactive X chromosome chromatin. Ubiquitination of H2A functions downstream of methylation of 'Lys-27' of histone H3 (H3K27me). H2AK119Ub by RNF2/RING2 can also be induced by ultraviolet and may be involved in DNA repair. Monoubiquitination of Lys-120 (H2AK119Ub) by TRIM37 may promote transformation of cells in a number of breast cancers. Following DNA double-strand breaks (DSBs), it is ubiquitinated through 'Lys-63' linkage of ubiquitin moieties by the E2 ligase UBE2N and the E3 ligases RNF8 and RNF168, leading to the recruitment of repair proteins to sites of DNA damage. Ubiquitination at Lys-14 and Lys-16 (H2AK13Ub and H2AK15Ub, respectively) in response to DNA damage is initiated by RNF168 that mediates monoubiquitination at these 2 sites, and 'Lys-63'-linked ubiquitin are then conjugated to monoubiquitin; RNF8 is able to extend 'Lys-63'-linked ubiquitin chains in vitro. Deubiquitinated by USP51 at Lys-14 and Lys-16 (H2AK13Ub and H2AK15Ub, respectively) after damaged DNA is repaired. H2AK119Ub and ionizing radiation-induced 'Lys-63'-linked ubiquitination (H2AK13Ub and H2AK15Ub) are distinct events. Phosphorylation on Ser-2 (H2AS1ph) is enhanced during mitosis. Phosphorylation on Ser-2 by RPS6KA5/MSK1 directly represses transcription. Acetylation of H3 inhibits Ser-2 phosphorylation by RPS6KA5/MSK1. Phosphorylation at Thr-121 (H2AT120ph) by DCAF1 is present in the regulatory region of many tumor suppresor genes and down-regulates their transcription. In terms of processing, glutamine methylation at Gln-105 (H2AQ104me) by FBL is specifically dedicated to polymerase I. It is present at 35S ribosomal DNA locus and impairs binding of the FACT complex. Post-translationally, symmetric dimethylation on Arg-4 by the PRDM1/PRMT5 complex may play a crucial role in the germ-cell lineage. Crotonylation (Kcr) is specifically present in male germ cells and marks testis-specific genes in post-meiotic cells, including X-linked genes that escape sex chromosome inactivation in haploid cells. Crotonylation marks active promoters and enhancers and confers resistance to transcriptional repressors. It is also associated with post-meiotically activated genes on autosomes. In terms of processing, lactylated in macrophages by EP300/P300 by using lactoyl-CoA directly derived from endogenous or exogenous lactate, leading to stimulates gene transcription.

Its subcellular location is the nucleus. The protein localises to the chromosome. Its function is as follows. Core component of nucleosome. Nucleosomes wrap and compact DNA into chromatin, limiting DNA accessibility to the cellular machineries which require DNA as a template. Histones thereby play a central role in transcription regulation, DNA repair, DNA replication and chromosomal stability. DNA accessibility is regulated via a complex set of post-translational modifications of histones, also called histone code, and nucleosome remodeling. The polypeptide is Histone H2A type 1-C (Homo sapiens (Human)).